Here is a 467-residue protein sequence, read N- to C-terminus: NALCN channel auxiliary factor 1 (467 aa).

The chain crosses the membrane as a helical span at residues 40–60 (LSLASLLFFTVLLSDHLWFCA). The interval 121 to 161 (MGESSPAAQAHRLLSASSSPTLPPSPGGGGGSKGNRGKNNR) is disordered. 3 N-linked (GlcNAc...) asparagine glycosylation sites follow: Asn-160, Asn-226, and Asn-254. 7 disulfides stabilise this stretch: Cys-200-Cys-270, Cys-235-Cys-322, Cys-255-Cys-270, Cys-313-Cys-350, Cys-333-Cys-386, Cys-339-Cys-385, and Cys-343-Cys-370. Positions 390-408 (SEEQTAPRPKGTVDRRDSC) are enriched in basic and acidic residues. Residues 390–409 (SEEQTAPRPKGTVDRRDSCP) form a disordered region. The helical transmembrane segment at 426–446 (LKLCVLVLILLHTVLTASAAQ) threads the bilayer. N-linked (GlcNAc...) asparagine glycosylation is present at Asn-462.

The protein belongs to the NALF family. Component of the NALCN channel complex. NALCN complex consists of NALCN and auxiliary subunits, UNC79, UNC80 and NACL1. These auxiliary subunits are essential for the NALCN channel function.

The protein localises to the cell membrane. In terms of biological role, auxillary component of the NALCN sodium channel complex, a channel that regulates the resting membrane potential and controls neuronal excitability. In Mus musculus (Mouse), this protein is NALCN channel auxiliary factor 1.